A 926-amino-acid chain; its full sequence is Alpha-aminoadipic semialdehyde synthase, mitochondrial (926 aa).

The N-terminal 27 residues, 1 to 27 (MLRAQRPRLARLRACLSRGLHHKPVMA), are a transit peptide targeting the mitochondrion. Positions 28–455 (LRREDVNAWE…DAVITSNGLL (428 aa)) are lysine-ketoglutarate reductase. N6-acetyllysine is present on residues Lys-48, Lys-52, and Lys-56. Lys-93 carries the post-translational modification N6-acetyllysine; alternate. At Lys-93 the chain carries N6-succinyllysine; alternate. N6-acetyllysine is present on Lys-128. Lys-138 is subject to N6-acetyllysine; alternate. At Lys-138 the chain carries N6-succinyllysine; alternate. N6-succinyllysine is present on Lys-274. An N6-acetyllysine; alternate modification is found at Lys-286. An N6-succinyllysine; alternate modification is found at Lys-286. Lys-333 carries the post-translational modification N6-succinyllysine. N6-acetyllysine; alternate is present on Lys-458. Lys-458 bears the N6-succinyllysine; alternate mark. A saccharopine dehydrogenase region spans residues 477–926 (MSTKKKVLVL…VFNTQSTIKL (450 aa)). Positions 488, 512, and 516 each coordinate NAD(+). N6-acetyllysine; alternate is present on residues Lys-523 and Lys-535. 2 positions are modified to N6-succinyllysine; alternate: Lys-523 and Lys-535. Leu-554, Ala-576, and Ser-577 together coordinate NAD(+). 577–578 (SY) is a binding site for L-saccharopine. Lys-584 carries the post-translational modification N6-acetyllysine; alternate. Lys-584 is subject to N6-succinyllysine; alternate. Leu-603, Asp-604, and Pro-605 together coordinate NAD(+). Asp-604 lines the L-saccharopine pocket. Arg-703 is an L-saccharopine binding site. Lys-707 carries the post-translational modification N6-acetyllysine. An L-saccharopine-binding site is contributed by 724–726 (TLR). At Lys-732 the chain carries N6-succinyllysine. At Lys-739 the chain carries N6-acetyllysine. Lys-761 is subject to N6-acetyllysine; alternate. Lys-761 carries the N6-succinyllysine; alternate modification. Residues Lys-778 and Lys-780 each carry the N6-acetyllysine modification.

It in the N-terminal section; belongs to the AlaDH/PNT family. The protein in the C-terminal section; belongs to the saccharopine dehydrogenase family. As to quaternary structure, homotetramer. In terms of tissue distribution, highly expressed in kidney and liver, very low expression is seen in heart, brain, spleen, lung, skeletal muscle and testis.

Its subcellular location is the mitochondrion. It catalyses the reaction L-saccharopine + NADP(+) + H2O = L-lysine + 2-oxoglutarate + NADPH + H(+). The enzyme catalyses L-saccharopine + NAD(+) + H2O = (S)-2-amino-6-oxohexanoate + L-glutamate + NADH + H(+). The protein operates within amino-acid degradation; L-lysine degradation via saccharopine pathway; glutaryl-CoA from L-lysine: step 1/6. It participates in amino-acid degradation; L-lysine degradation via saccharopine pathway; glutaryl-CoA from L-lysine: step 2/6. In terms of biological role, bifunctional enzyme that catalyzes the first two steps in lysine degradation. This chain is Alpha-aminoadipic semialdehyde synthase, mitochondrial, found in Mus musculus (Mouse).